The primary structure comprises 674 residues: Membrane-anchored lipid-binding protein LAM5 (674 aa).

2 disordered regions span residues Met1–Glu52 and Asn65–Leu151. The Cytoplasmic segment spans residues Met1 to Met633. Positions Ala69–Ser81 are enriched in basic and acidic residues. A compositionally biased stretch (low complexity) spans Arg82–Ser119. The residue at position 110 (Thr110) is a Phosphothreonine. Phosphoserine occurs at positions 113 and 140. Thr143 carries the phosphothreonine modification. Ser149 carries the post-translational modification Phosphoserine. The GRAM domain maps to Lys198–Thr264. The segment covering Ile336–Asn357 has biased composition (acidic residues). A disordered region spans residues Ile336–Tyr380. Low complexity predominate over residues Ile358–Ser371. Residues Asn409 to Val582 enclose the VASt domain. Residues Glu634–Ile654 form a helical membrane-spanning segment. Over Arg655–Leu674 the chain is Lumenal.

This sequence belongs to the YSP2 family.

Its subcellular location is the endoplasmic reticulum membrane. Functionally, may be involved in sterol transfer between intracellular membranes. In Saccharomyces cerevisiae (strain ATCC 204508 / S288c) (Baker's yeast), this protein is Membrane-anchored lipid-binding protein LAM5.